Consider the following 103-residue polypeptide: MSLLEQVSVSKKANIYFDGRVASRSVFFADGSKQTLGVVQPGEYEFSTSQGEIMEVISGRFEVLLPETTTWQEFSEGTQFELAANVSFKIRNTAIAEYCCSYL.

It belongs to the nucleoside phosphorylase PpnP family.

The enzyme catalyses a purine D-ribonucleoside + phosphate = a purine nucleobase + alpha-D-ribose 1-phosphate. The catalysed reaction is adenosine + phosphate = alpha-D-ribose 1-phosphate + adenine. It carries out the reaction cytidine + phosphate = cytosine + alpha-D-ribose 1-phosphate. It catalyses the reaction guanosine + phosphate = alpha-D-ribose 1-phosphate + guanine. The enzyme catalyses inosine + phosphate = alpha-D-ribose 1-phosphate + hypoxanthine. The catalysed reaction is thymidine + phosphate = 2-deoxy-alpha-D-ribose 1-phosphate + thymine. It carries out the reaction uridine + phosphate = alpha-D-ribose 1-phosphate + uracil. It catalyses the reaction xanthosine + phosphate = alpha-D-ribose 1-phosphate + xanthine. In terms of biological role, catalyzes the phosphorolysis of diverse nucleosides, yielding D-ribose 1-phosphate and the respective free bases. Can use uridine, adenosine, guanosine, cytidine, thymidine, inosine and xanthosine as substrates. Also catalyzes the reverse reactions. The sequence is that of Pyrimidine/purine nucleoside phosphorylase from Shewanella baltica (strain OS155 / ATCC BAA-1091).